A 147-amino-acid polypeptide reads, in one-letter code: Large ribosomal subunit protein uL15 (147 aa).

The segment at 1 to 45 is disordered; it reads MTIKLHHLRPAPGAKSDKIRVGRGEGGKRGKTAGRGTKGTKARKN. Residues 15–28 are compositionally biased toward basic and acidic residues; the sequence is KSDKIRVGRGEGGK.

The protein belongs to the universal ribosomal protein uL15 family. In terms of assembly, part of the 50S ribosomal subunit.

Functionally, binds to the 23S rRNA. This is Large ribosomal subunit protein uL15 from Rhodococcus jostii (strain RHA1).